The sequence spans 318 residues: Gamma-glutamyl hydrolase (318 aa).

Positions 1–24 (MARLGRLLSVLGLVLCGATGLGLS) are cleaved as a signal peptide. The 294-residue stretch at 25 to 318 (APPAPTPKKP…SSFQQSYIFD (294 aa)) folds into the Gamma-glutamyl hydrolase domain. Residue asparagine 116 is glycosylated (N-linked (GlcNAc...) asparagine). Cysteine 134 functions as the Nucleophile in the catalytic mechanism. Residues asparagine 163 and asparagine 203 are each glycosylated (N-linked (GlcNAc...) asparagine). Histidine 244 acts as the Proton donor in catalysis. An N-linked (GlcNAc...) asparagine glycan is attached at asparagine 307.

This sequence belongs to the peptidase C26 family. As to quaternary structure, homodimer.

The protein resides in the secreted. It localises to the extracellular space. Its subcellular location is the lysosome. The protein localises to the melanosome. It catalyses the reaction (6S)-5,6,7,8-tetrahydrofolyl-(gamma-L-Glu)(n) + (n-1) H2O = (6S)-5,6,7,8-tetrahydrofolate + (n-1) L-glutamate. Hydrolyzes the polyglutamate sidechains of pteroylpolyglutamates. Progressively removes gamma-glutamyl residues from pteroylpoly-gamma-glutamate to yield pteroyl-alpha-glutamate (folic acid) and free glutamate. May play an important role in the bioavailability of dietary pteroylpolyglutamates and in the metabolism of pteroylpolyglutamates and antifolates. Exhibits either endo- or exopeptidase activity depending upon the tissue of origin. When secreted, it acts primarily as an endopeptidase. The chain is Gamma-glutamyl hydrolase (GGH) from Bos taurus (Bovine).